A 274-amino-acid chain; its full sequence is Copper chaperone for superoxide dismutase (274 aa).

Positions 11-74 constitute an HMA domain; sequence MCALEFTVQM…LLESTGRQAV (64 aa). The Cu cation site is built by C22 and C25. Residue K76 forms a Glycyl lysine isopeptide (Lys-Gly) (interchain with G-Cter in ubiquitin) linkage. The interval 88–234 is superoxide dismutase-like; that stretch reads AAVAIMEGSG…LACGIIARSA (147 aa). A disulfide bridge links C141 with C227. The Zn(2+) site is built by H147, H155, H164, and D167. Glycyl lysine isopeptide (Lys-Gly) (interchain with G-Cter in ubiquitin) cross-links involve residues K189, K216, and K241. Residues C244 and C246 each contribute to the Cu cation site. Residue S267 is modified to Phosphoserine.

This sequence in the C-terminal section; belongs to the Cu-Zn superoxide dismutase family. In terms of assembly, homodimer, and heterodimer with SOD1. Interacts with COMMD1. Interacts with XIAP/BIRC4. Interacts with SLC31A1(via C-terminal domain); this interaction is Cu(1+)-mediated. The heterodimer CCS:SOD1 interacts with SLC31A1; this heterotrimer is Cu(1+)-mediated and its maintenance is regulated through SOD1 activation. Cu(2+) serves as cofactor. It depends on Zn(2+) as a cofactor. Ubiquitinion by XIAP/BIRC4 leads to enhancement of its chaperone activity toward its physiologic target, SOD1, rather than proteasomal degradation. XIAP/BIRC4 preferentially ubiquitinates at Lys-241.

It localises to the cytoplasm. In terms of biological role, delivers copper to copper zinc superoxide dismutase (SOD1). The sequence is that of Copper chaperone for superoxide dismutase from Rattus norvegicus (Rat).